A 660-amino-acid polypeptide reads, in one-letter code: Bifunctional polymyxin resistance protein ArnA (660 aa).

The interval 1–304 (MKTVVFAYHD…TLGLVQGSRL (304 aa)) is formyltransferase ArnAFT. 86–88 (HLI) provides a ligand contact to (6R)-10-formyltetrahydrofolate. Residue His-104 is the Proton donor; for formyltransferase activity of the active site. (6R)-10-formyltetrahydrofolate-binding positions include Arg-114 and 136-140 (VKRAD). Positions 314-660 (RRTRVLILGV…RTVDLTDKPS (347 aa)) are dehydrogenase ArnADH. NAD(+) is bound by residues Asp-347 and 368–369 (DI). Residues Ala-393, Tyr-398, and 432-433 (TS) contribute to the UDP-alpha-D-glucuronate site. The Proton acceptor; for decarboxylase activity role is filled by Glu-434. UDP-alpha-D-glucuronate-binding positions include Arg-460, Asn-492, 526-535 (KLIDGGKQKR), and Tyr-613. Arg-619 functions as the Proton donor; for decarboxylase activity in the catalytic mechanism.

In the N-terminal section; belongs to the Fmt family. UDP-L-Ara4N formyltransferase subfamily. It in the C-terminal section; belongs to the NAD(P)-dependent epimerase/dehydratase family. UDP-glucuronic acid decarboxylase subfamily. Homohexamer, formed by a dimer of trimers.

The catalysed reaction is UDP-alpha-D-glucuronate + NAD(+) = UDP-beta-L-threo-pentopyranos-4-ulose + CO2 + NADH. It carries out the reaction UDP-4-amino-4-deoxy-beta-L-arabinose + (6R)-10-formyltetrahydrofolate = UDP-4-deoxy-4-formamido-beta-L-arabinose + (6S)-5,6,7,8-tetrahydrofolate + H(+). It participates in nucleotide-sugar biosynthesis; UDP-4-deoxy-4-formamido-beta-L-arabinose biosynthesis; UDP-4-deoxy-4-formamido-beta-L-arabinose from UDP-alpha-D-glucuronate: step 1/3. The protein operates within nucleotide-sugar biosynthesis; UDP-4-deoxy-4-formamido-beta-L-arabinose biosynthesis; UDP-4-deoxy-4-formamido-beta-L-arabinose from UDP-alpha-D-glucuronate: step 3/3. Its pathway is bacterial outer membrane biogenesis; lipopolysaccharide biosynthesis. In terms of biological role, bifunctional enzyme that catalyzes the oxidative decarboxylation of UDP-glucuronic acid (UDP-GlcUA) to UDP-4-keto-arabinose (UDP-Ara4O) and the addition of a formyl group to UDP-4-amino-4-deoxy-L-arabinose (UDP-L-Ara4N) to form UDP-L-4-formamido-arabinose (UDP-L-Ara4FN). The modified arabinose is attached to lipid A and is required for resistance to polymyxin and cationic antimicrobial peptides. This Escherichia coli O17:K52:H18 (strain UMN026 / ExPEC) protein is Bifunctional polymyxin resistance protein ArnA.